A 299-amino-acid polypeptide reads, in one-letter code: Ribosomal RNA small subunit methyltransferase A (299 aa).

S-adenosyl-L-methionine-binding residues include asparagine 44, valine 46, glycine 71, glutamate 92, aspartate 122, and asparagine 141.

This sequence belongs to the class I-like SAM-binding methyltransferase superfamily. rRNA adenine N(6)-methyltransferase family. RsmA subfamily.

It localises to the cytoplasm. It carries out the reaction adenosine(1518)/adenosine(1519) in 16S rRNA + 4 S-adenosyl-L-methionine = N(6)-dimethyladenosine(1518)/N(6)-dimethyladenosine(1519) in 16S rRNA + 4 S-adenosyl-L-homocysteine + 4 H(+). Its function is as follows. Specifically dimethylates two adjacent adenosines (A1518 and A1519) in the loop of a conserved hairpin near the 3'-end of 16S rRNA in the 30S particle. May play a critical role in biogenesis of 30S subunits. The polypeptide is Ribosomal RNA small subunit methyltransferase A (Rhodococcus erythropolis (strain PR4 / NBRC 100887)).